A 460-amino-acid chain; its full sequence is tRNA modification GTPase MnmE (460 aa).

Residues arginine 29, glutamate 91, and lysine 132 each coordinate (6S)-5-formyl-5,6,7,8-tetrahydrofolate. Residues 227-383 (GISIALIGKT…LIDTIIKKCG (157 aa)) form the TrmE-type G domain. Residue asparagine 237 coordinates K(+). GTP is bound by residues 237 to 242 (NVGKSS), 256 to 262 (TNIPGTT), and 281 to 284 (DTAG). Serine 241 is a binding site for Mg(2+). 3 residues coordinate K(+): threonine 256, isoleucine 258, and threonine 261. Position 262 (threonine 262) interacts with Mg(2+). Residue lysine 460 participates in (6S)-5-formyl-5,6,7,8-tetrahydrofolate binding.

The protein belongs to the TRAFAC class TrmE-Era-EngA-EngB-Septin-like GTPase superfamily. TrmE GTPase family. Homodimer. Heterotetramer of two MnmE and two MnmG subunits. The cofactor is K(+).

Its subcellular location is the cytoplasm. In terms of biological role, exhibits a very high intrinsic GTPase hydrolysis rate. Involved in the addition of a carboxymethylaminomethyl (cmnm) group at the wobble position (U34) of certain tRNAs, forming tRNA-cmnm(5)s(2)U34. The protein is tRNA modification GTPase MnmE of Prochlorococcus marinus (strain MIT 9215).